The primary structure comprises 622 residues: Polypeptide N-acetylgalactosaminyltransferase 18 (622 aa).

At 1-12 (MVCTRKTKTLVS) the chain is on the cytoplasmic side. A helical; Signal-anchor for type II membrane protein membrane pass occupies residues 13–35 (TCVILSGMTNIICLLYVGWVTNY). At 36-622 (IASVYVRGQE…ITNVLRSLVS (587 aa)) the chain is on the lumenal side. 5 disulfide bridges follow: Cys144-Cys392, Cys383-Cys462, Cys497-Cys513, Cys545-Cys558, and Cys586-Cys606. Asn146 carries an N-linked (GlcNAc...) asparagine glycan. The catalytic subdomain A stretch occupies residues 153–267 (LPEVSIVFIF…VGWAEPVLTR (115 aa)). Asp194 serves as a coordination point for substrate. Asn195 is a glycosylation site (N-linked (GlcNAc...) asparagine). Residues Asp251 and His253 each coordinate Mn(2+). An N-linked (GlcNAc...) asparagine glycan is attached at Asn320. Positions 324–400 (PIRSPALIGC…PCSRIAHIER (77 aa)) are catalytic subdomain B. His397 serves as a coordination point for Mn(2+). Residues Arg400 and Tyr405 each coordinate substrate. Residues 484 to 614 (AYGVLQNSLK…KCSGQHWTIT (131 aa)) form the Ricin B-type lectin domain.

This sequence belongs to the glycosyltransferase 2 family. GalNAc-T subfamily. Requires Mn(2+) as cofactor.

The protein localises to the golgi apparatus membrane. The catalysed reaction is L-seryl-[protein] + UDP-N-acetyl-alpha-D-galactosamine = a 3-O-[N-acetyl-alpha-D-galactosaminyl]-L-seryl-[protein] + UDP + H(+). It carries out the reaction L-threonyl-[protein] + UDP-N-acetyl-alpha-D-galactosamine = a 3-O-[N-acetyl-alpha-D-galactosaminyl]-L-threonyl-[protein] + UDP + H(+). Its pathway is protein modification; protein glycosylation. Catalyzes the initial reaction in O-linked oligosaccharide biosynthesis, the transfer of an N-acetyl-D-galactosamine (GalNAc) residue from UDP-GalNAc to a serine or threonine residue on the protein receptor. This chain is Polypeptide N-acetylgalactosaminyltransferase 18 (Galnt18), found in Mus musculus (Mouse).